Consider the following 170-residue polypeptide: uncharacterized protein (170 aa).

This is an uncharacterized protein from Saccharomyces cerevisiae (strain ATCC 204508 / S288c) (Baker's yeast).